Consider the following 157-residue polypeptide: 3-hydroxyacyl-[acyl-carrier-protein] dehydratase FabZ (157 aa).

The active site involves His-58.

Belongs to the thioester dehydratase family. FabZ subfamily.

The protein resides in the cytoplasm. It carries out the reaction a (3R)-hydroxyacyl-[ACP] = a (2E)-enoyl-[ACP] + H2O. Involved in unsaturated fatty acids biosynthesis. Catalyzes the dehydration of short chain beta-hydroxyacyl-ACPs and long chain saturated and unsaturated beta-hydroxyacyl-ACPs. This chain is 3-hydroxyacyl-[acyl-carrier-protein] dehydratase FabZ, found in Brucella ovis (strain ATCC 25840 / 63/290 / NCTC 10512).